Reading from the N-terminus, the 398-residue chain is MALLRRPTVSSDLENIDTGFNSKVKSHVTIRRTVLEEIGNKVTTRAAQVAKKAQNTKVPVQPTKTTNVNKQLKPTASVKPVQMEMLAPKGPSPTPEDVSMKEENLCQAFSDALLCKIEDIDNEDWENPQLCSDYVKDIYQYLRQLEVLQSINPHFLDGRDINGRMRAILVDWLVQVHSKFRLLQETLYMCVAIMDRFLQVQPVSRKKLQLVGITALLLASKYEEMFSPNIEDFVYITDNAYTSSQIREMETLILKELKFELGRPLPLHFLRRASKAGEVDVEQHTLAKYLMELTLIDYDMVHYHPSKVAAAASCLSQKLLGQGKWNLKQQYYTGYTENEVLEVMQHMAKNVVKVDENLTKFIAIKNKYASSKLLKISTIPQLNSKAVKDLASPLMGRS.

Phosphothreonine is present on Thr8. Phosphoserine occurs at positions 11, 77, and 92. Phosphothreonine is present on Thr94. Phosphoserine is present on residues Ser99, Ser392, and Ser398.

The protein belongs to the cyclin family. Cyclin AB subfamily. Interacts with the CDK1 protein kinase to form a serine/threonine kinase holoenzyme complex also known as maturation promoting factor (MPF). The cyclin subunit imparts substrate specificity to the complex.

Essential for the control of the cell cycle at the G2/M (mitosis) transition. The protein is G2/mitotic-specific cyclin-B2 (CCNB2) of Macaca fascicularis (Crab-eating macaque).